The sequence spans 363 residues: NAD-dependent epimerase/dehydratase tndE (363 aa).

A helical transmembrane segment spans residues 10–30 (GLVLITGVNGFLASHLALQLI). Tyr176 contributes to the NADP(+) binding site.

It belongs to the NAD(P)-dependent epimerase/dehydratase family. Dihydroflavonol-4-reductase subfamily.

Its subcellular location is the membrane. It participates in secondary metabolite biosynthesis; terpenoid biosynthesis. Functionally, NAD-dependent epimerase/dehydratase; part of the gene cluster that mediates the biosynthesis of talaronoid C, a fusicoccane diterpenoid with an unprecedented tricyclic 5/8/6 ring system. The first step in the pathway is performed by the fusicoccadiene synthase tndC that possesses both prenyl transferase and terpene cyclase activity, converting isopentenyl diphosphate and dimethylallyl diphosphate into geranylgeranyl diphosphate (GGDP) and further converting GGDP into talarodiene, a precursor for talaronoid C. The remaining enzymes from the cluster include the cytochrome P450 monooxygenase tndB, the aldehyde reductase tndE and the alcohol dehydrogenase tndF that are involved in the conversion of talarodiene into talaronoid C. The sequence is that of NAD-dependent epimerase/dehydratase tndE from Aspergillus flavipes.